A 279-amino-acid polypeptide reads, in one-letter code: RRP15-like protein (279 aa).

3 disordered regions span residues 1-40, 56-120, and 200-279; these read MALL…GANA, GPTV…TERR, and KSTA…DEED. The segment covering 73–83 has biased composition (basic and acidic residues); that stretch reads KTSEAAKKPGF. 2 stretches are compositionally biased toward acidic residues: residues 93 to 104 and 213 to 224; these read KEEDDDDEEDGD and QETDDDDEDDTA. Basic and acidic residues predominate over residues 232–245; sequence KKSEWNVLREDFMT. A compositionally biased stretch (acidic residues) spans 267-279; sequence DEADDSDDDDEED.

Belongs to the RRP15 family.

The chain is RRP15-like protein from Drosophila pseudoobscura pseudoobscura (Fruit fly).